Consider the following 1409-residue polypeptide: Protein three rows (1409 aa).

The tract at residues 1052 to 1058 (VEPIRKQ) is separase cleavage-site. 2 disordered regions span residues 1260 to 1284 (PIGC…SDHV) and 1297 to 1409 (DDAA…RQRN). 2 stretches are compositionally biased toward low complexity: residues 1264–1273 (SNSSSSSSKS) and 1300–1310 (ASVSASTPAPS).

As to quaternary structure, interacts with pim and Sse. Cleavage of thr contributes to inactivation of Sse.

The protein resides in the cytoplasm. Functionally, required specifically for chromosome disjunction during all mitoses; maternally provided protein is sufficient until mitosis 14 then zygotic protein is required. Involved in formation and/or maintenance of epithelial structures: bud extension during Malpighian tubule development, and foregut and hindgut morphogenesis. This chain is Protein three rows (thr), found in Drosophila pseudoobscura pseudoobscura (Fruit fly).